Here is a 201-residue protein sequence, read N- to C-terminus: Potassium-transporting ATPase KdpC subunit (201 aa).

A helical transmembrane segment spans residues 7 to 29 (PALVLLTALTAITGLAYPLAMTG).

This sequence belongs to the KdpC family. In terms of assembly, the system is composed of three essential subunits: KdpA, KdpB and KdpC.

It localises to the cell inner membrane. Part of the high-affinity ATP-driven potassium transport (or Kdp) system, which catalyzes the hydrolysis of ATP coupled with the electrogenic transport of potassium into the cytoplasm. This subunit acts as a catalytic chaperone that increases the ATP-binding affinity of the ATP-hydrolyzing subunit KdpB by the formation of a transient KdpB/KdpC/ATP ternary complex. The polypeptide is Potassium-transporting ATPase KdpC subunit (Methylorubrum populi (strain ATCC BAA-705 / NCIMB 13946 / BJ001) (Methylobacterium populi)).